The sequence spans 483 residues: MENGEKAAETVVVGNYVEMEKDGKALDIKSKLSDMFWHGGSAYDAWFSCASNQVAQVLLTLPYSFSQLGMLSGILFQLFYGILGSWTAYLISILYVEYRTRKEREKVNFRNHVIQWFEVLDGLLGKHWRNVGLAFNCTFLLFGSVIQLIACASNIYYINDNLDKRTWTYIFGACCATTVFIPSFHNYRIWSFLGLLMTTYTAWYLTIASILHGQVEGVKHSGPSKLVLYFTGATNILYTFGGHAVTVEIMHAMWKPQKFKSIYLFATLYVLTLTLPSASAVYWAFGDLLLNHSNAFALLPKNLYRDFAVVLMLIHQFITFGFACTPLYFVWEKLIGMHECRSMCKRAAARLPVVIPIWFLAIIFPFFGPINSTVGSLLVSFTVYIIPALAHIFTFRSSAARENAVEQPPRFLGRWTGAFTINAFIVVWVFIVGFGFGGWASMINFVHQIDTFGLFTKCYQCPPPVMVSPPPISHPHFNHTHGL.

Topologically, residues methionine 1–glutamine 53 are cytoplasmic. The chain crosses the membrane as a helical span at residues valine 54–leucine 71. Residues serine 72 to glycine 73 lie on the Extracellular side of the membrane. The chain crosses the membrane as a helical span at residues isoleucine 74–leucine 94. Over tyrosine 95 to asparagine 130 the chain is Cytoplasmic. A helical membrane pass occupies residues valine 131–cysteine 151. Residues alanine 152–threonine 166 lie on the Extracellular side of the membrane. Residues tryptophan 167 to tyrosine 187 traverse the membrane as a helical segment. Residues arginine 188–tryptophan 190 lie on the Cytoplasmic side of the membrane. Residues serine 191 to leucine 211 form a helical membrane-spanning segment. Topologically, residues histidine 212–leucine 226 are extracellular. Residues valine 227–valine 247 traverse the membrane as a helical segment. The Cytoplasmic segment spans residues glutamate 248–serine 261. A helical membrane pass occupies residues isoleucine 262–tyrosine 282. Topologically, residues tryptophan 283–aspartate 306 are extracellular. N-linked (GlcNAc...) asparagine glycosylation is present at asparagine 291. Residues phenylalanine 307–leucine 327 form a helical membrane-spanning segment. At tyrosine 328–arginine 350 the chain is on the cytoplasmic side. A helical transmembrane segment spans residues leucine 351–asparagine 371. Residues serine 372–valine 374 are Extracellular-facing. A helical transmembrane segment spans residues glycine 375–phenylalanine 395. The Cytoplasmic portion of the chain corresponds to arginine 396 to asparagine 422. The helical transmembrane segment at alanine 423–isoleucine 443 threads the bilayer. The Extracellular segment spans residues asparagine 444 to leucine 483. N-linked (GlcNAc...) asparagine glycosylation occurs at asparagine 478.

It belongs to the amino acid/polyamine transporter 2 family. Amino acid/auxin permease (AAAP) (TC 2.A.18.1) subfamily.

It is found in the cell membrane. In terms of biological role, carrier protein involved in proton-driven auxin influx. Mediates the formation of auxin gradient from developing leaves (site of auxin biosynthesis) to tips by contributing to the loading of auxin in vascular tissues and facilitating acropetal (base to tip) auxin transport within inner tissues of the root apex, and basipetal (tip to base) auxin transport within outer tissues of the root apex. This is Auxin transporter-like protein 2 (LAX2) from Arabidopsis thaliana (Mouse-ear cress).